The sequence spans 137 residues: MKIIGLDVGSKTIGVAVSDALGWTAQGVKTIRWDENDLSSADEELEKIISEHEIGKAIIGLPKNMNGTIGERGEASQRYANHIEKVFQIPVDLWDERLTTMAAERVLLEADMSRSKRKKVIDKMAAVMILQGYLDQK.

This sequence belongs to the YqgF nuclease family.

Its subcellular location is the cytoplasm. Functionally, could be a nuclease involved in processing of the 5'-end of pre-16S rRNA. The polypeptide is Putative pre-16S rRNA nuclease (Oceanobacillus iheyensis (strain DSM 14371 / CIP 107618 / JCM 11309 / KCTC 3954 / HTE831)).